Reading from the N-terminus, the 279-residue chain is Thymidylate synthase (279 aa).

141–142 (RR) serves as a coordination point for dUMP. Catalysis depends on Cys-161, which acts as the Nucleophile. DUMP contacts are provided by residues 181-184 (RSND), Asn-192, and 222-224 (HVY). Asp-184 serves as a coordination point for (6R)-5,10-methylene-5,6,7,8-tetrahydrofolate. Position 278 (Ala-278) interacts with (6R)-5,10-methylene-5,6,7,8-tetrahydrofolate.

This sequence belongs to the thymidylate synthase family. In terms of assembly, homodimer.

The enzyme catalyses dUMP + (6R)-5,10-methylene-5,6,7,8-tetrahydrofolate = 7,8-dihydrofolate + dTMP. Its pathway is pyrimidine metabolism; dTTP biosynthesis. Functionally, provides the sole de novo source of dTMP for DNA biosynthesis. The protein is Thymidylate synthase (thyP3) of Bacillus subtilis (Bacteriophage phi-3T).